The following is a 159-amino-acid chain: Protein-export protein SecB (159 aa).

Belongs to the SecB family. In terms of assembly, homotetramer, a dimer of dimers. One homotetramer interacts with 1 SecA dimer.

It localises to the cytoplasm. In terms of biological role, one of the proteins required for the normal export of preproteins out of the cell cytoplasm. It is a molecular chaperone that binds to a subset of precursor proteins, maintaining them in a translocation-competent state. It also specifically binds to its receptor SecA. The sequence is that of Protein-export protein SecB from Marinomonas sp. (strain MWYL1).